The following is a 450-amino-acid chain: Keratin, type I cytoskeletal 25 (450 aa).

The segment at 1 to 24 (MSLRLPSGSRRASPRPTTGSLRLS) is disordered. Residues 1-78 (MSLRLPSGSR…MNEGGLLSGN (78 aa)) are head. The segment at 79-114 (EKVTMQNLNDRLASYLENVRALEEANADLEQKIKGW) is coil 1A. The region spanning 79-394 (EKVTMQNLND…LLIGGDDGAC (316 aa)) is the IF rod domain. Positions 115–136 (YEKFGPGSCRGLDHDYSRYFPI) are linker 1. The coil 1B stretch occupies residues 137–228 (IEDLKNQIIA…KNHKEEMQVL (92 aa)). The tract at residues 229 to 251 (QCAAGGNVNVEMNAAPGVDLTVL) is linker 12. Residues 252–390 (LNNMRAEYEA…ETYCLLIGGD (139 aa)) form a coil 2 region. The tract at residues 391-450 (DGACKSGGYKSKDYAAGNMGNQMKDPIKAIVVKKVLEEVDQRSKILTTRLHSLEEKSQSN) is tail. At S442 the chain carries Phosphoserine.

Belongs to the intermediate filament family. Heterodimer of a type I and a type II keratin. Heterodimer with type II keratin KRT5 leading to the formation of keratin intermediate filament (KIF) network. Interacts with KRT6A to form filaments.

The protein localises to the cytoplasm. In terms of biological role, essential for the proper assembly of type I and type II keratin protein complexes and formation of keratin intermediate filaments in the inner root sheath (irs). Plays a role in the cytoskeleton organization. The polypeptide is Keratin, type I cytoskeletal 25 (Capra hircus (Goat)).